We begin with the raw amino-acid sequence, 195 residues long: 3-isopropylmalate dehydratase small subunit (195 aa).

Belongs to the LeuD family. LeuD type 1 subfamily. Heterodimer of LeuC and LeuD.

The catalysed reaction is (2R,3S)-3-isopropylmalate = (2S)-2-isopropylmalate. The protein operates within amino-acid biosynthesis; L-leucine biosynthesis; L-leucine from 3-methyl-2-oxobutanoate: step 2/4. Functionally, catalyzes the isomerization between 2-isopropylmalate and 3-isopropylmalate, via the formation of 2-isopropylmaleate. This is 3-isopropylmalate dehydratase small subunit from Frankia casuarinae (strain DSM 45818 / CECT 9043 / HFP020203 / CcI3).